Reading from the N-terminus, the 70-residue chain is Large ribosomal subunit protein bL28 (70 aa).

This sequence belongs to the bacterial ribosomal protein bL28 family.

In Thermosipho melanesiensis (strain DSM 12029 / CIP 104789 / BI429), this protein is Large ribosomal subunit protein bL28.